The primary structure comprises 133 residues: UPF0102 protein ABSDF1354 (133 aa).

Belongs to the UPF0102 family.

The protein is UPF0102 protein ABSDF1354 of Acinetobacter baumannii (strain SDF).